Consider the following 362-residue polypeptide: Ferredoxin--NADP reductase, leaf isozyme 1, chloroplastic (362 aa).

The transit peptide at 1 to 62 (MAAVTAAAVS…DAAAVAAAPA (62 aa)) directs the protein to the chloroplast. An FAD-binding FR-type domain is found at 83–205 (KEPYVGKCLL…TGPVGKEMLM (123 aa)). Residues 141 to 144 (RLYS), 162 to 164 (CVK), tyrosine 168, 179 to 181 (VCS), and threonine 220 each bind FAD. Serine 144 and lysine 164 together coordinate NADP(+). A disulfide bond links cysteine 180 and cysteine 185. A Phosphoserine modification is found at serine 181. Residues threonine 220, 252-253 (VP), 282-283 (SR), lysine 292, 321-322 (GL), and glutamate 360 each bind NADP(+).

The protein belongs to the ferredoxin--NADP reductase type 1 family. As to quaternary structure, component of high molecular weight thylakoid LFNRs-containing protein complexes containing LIR1, LFNR1, LFNR2, TIC62 and TROL proteins. Interacts directly with LIR1 and TIC62; LIR1 increases the affinity of LFNR1 and LFNR2 for TIC62. The cofactor is FAD. May form interchain disulfide bonds with LIR1.

The protein localises to the plastid. The protein resides in the chloroplast stroma. It is found in the chloroplast thylakoid membrane. It carries out the reaction 2 reduced [2Fe-2S]-[ferredoxin] + NADP(+) + H(+) = 2 oxidized [2Fe-2S]-[ferredoxin] + NADPH. The protein operates within energy metabolism; photosynthesis. In terms of biological role, may play a key role in regulating the relative amounts of cyclic and non-cyclic electron flow to meet the demands of the plant for ATP and reducing power. In Oryza sativa subsp. japonica (Rice), this protein is Ferredoxin--NADP reductase, leaf isozyme 1, chloroplastic.